The following is a 186-amino-acid chain: Ribosome-recycling factor (186 aa).

This sequence belongs to the RRF family.

The protein resides in the cytoplasm. In terms of biological role, responsible for the release of ribosomes from messenger RNA at the termination of protein biosynthesis. May increase the efficiency of translation by recycling ribosomes from one round of translation to another. The protein is Ribosome-recycling factor of Bartonella bacilliformis (strain ATCC 35685 / KC583 / Herrer 020/F12,63).